The chain runs to 159 residues: SsrA-binding protein (159 aa).

Belongs to the SmpB family.

Its subcellular location is the cytoplasm. Its function is as follows. Required for rescue of stalled ribosomes mediated by trans-translation. Binds to transfer-messenger RNA (tmRNA), required for stable association of tmRNA with ribosomes. tmRNA and SmpB together mimic tRNA shape, replacing the anticodon stem-loop with SmpB. tmRNA is encoded by the ssrA gene; the 2 termini fold to resemble tRNA(Ala) and it encodes a 'tag peptide', a short internal open reading frame. During trans-translation Ala-aminoacylated tmRNA acts like a tRNA, entering the A-site of stalled ribosomes, displacing the stalled mRNA. The ribosome then switches to translate the ORF on the tmRNA; the nascent peptide is terminated with the 'tag peptide' encoded by the tmRNA and targeted for degradation. The ribosome is freed to recommence translation, which seems to be the essential function of trans-translation. The chain is SsrA-binding protein from Coxiella burnetii (strain RSA 331 / Henzerling II).